We begin with the raw amino-acid sequence, 165 residues long: Small ribosomal subunit protein uS17c (165 aa).

The transit peptide at 1–57 (MSLSFSLLKPPLSSSNPNPFLHGTTTKLSLLPSFSALSLSSSPPSSSTTYTFPVIKA) directs the protein to the chloroplast. Residues 128–165 (AVAPEGRQSSATRPKPIQAASDELGIPLESQVEGDKTV) form a disordered region.

In terms of assembly, component of the chloroplast small ribosomal subunit (SSU). Mature 70S chloroplast ribosomes of higher plants consist of a small (30S) and a large (50S) subunit. The 30S small subunit contains 1 molecule of ribosomal RNA (16S rRNA) and 24 different proteins. The 50S large subunit contains 3 rRNA molecules (23S, 5S and 4.5S rRNA) and 33 different proteins.

It is found in the plastid. The protein localises to the chloroplast. Component of the chloroplast ribosome (chloro-ribosome), a dedicated translation machinery responsible for the synthesis of chloroplast genome-encoded proteins, including proteins of the transcription and translation machinery and components of the photosynthetic apparatus. This chain is Small ribosomal subunit protein uS17c (RPS17), found in Spinacia oleracea (Spinach).